Consider the following 555-residue polypeptide: MSTETELQVAVKTSAKKDSRKKGQDRSEATLIKRFKGEGVRYKAKLIGIDEVSAARGDKLCQDSMMKLKGVVAGARSKGEHKQKIFLTISFGGIKIFDEKTGALQHHHAVHEISYIAKDTTDHRAFGYACGKEGNHRFVAIKTAQAAEPVILDLRDLFQLIYELKQREELEKKAQKDKQCEQAVYQTILEEDVEDPVYQYIVFEAGHEPIRDPETEENIYQVPTSQKKEGVYDVPKSQPVSAVTQLELFGDMSTPPDITSPPTPATPGDAFIPSSSQTLPASADVFGSVPFSTAAVPSGYVAMGAVLPSFWGQQPLVQQQMVMGAQPPVAQVMPGAQPIAWGQPGLFPATQQPWPTVAGQFPPAAFMPTQTVMPLPAAMFQGPLTPLATVPGTSDSTRPSPQTDKPRQKMGKETFKDFQMAQPPPVPSRKPDQPSLTCTSEAFSSYFNKVGVAQDTDDCDDFDISQLNLTPVTSTTPSTNSPPTPAPRQSSPSKSSASHASDPTTDDIFEEGFESPSKSEEQEAPDGSQASSNSDPFGEPSGEPSGDNISPQAGS.

A disordered region spans residues 1–26 (MSTETELQVAVKTSAKKDSRKKGQDR). Over residues 15–26 (AKKDSRKKGQDR) the composition is skewed to basic and acidic residues. The region spanning 36–189 (KGEGVRYKAK…CEQAVYQTIL (154 aa)) is the PID domain. A phosphotyrosine mark is found at Tyr198, Tyr220, and Tyr232. Disordered regions lie at residues 384–410 (LTPLATVPGTSDSTRPSPQTDKPRQKM), 418–437 (FQMAQPPPVPSRKPDQPSLT), and 468–555 (NLTP…QAGS). The segment covering 391 to 403 (PGTSDSTRPSPQT) has biased composition (polar residues). Composition is skewed to low complexity over residues 470–479 (TPVTSTTPST) and 487–501 (PRQSSPSKSSASHAS). Ser491 is subject to Phosphoserine; by CDK5. Residues 504 to 513 (TTDDIFEEGF) are compositionally biased toward acidic residues.

In terms of assembly, associates with the SH2 domains of SRC, FYN and ABL. Interacts (phosphorylated on tyrosine residues) with CRK and CRKL (via respective SH2 domain). Interacts with DAB2IP, SIAH1, LRP8 and VLDLR. Interacts with LRP1. Interacts with APLP1 (via NPXY motif). Interacts with DAB2IP. Interacts with ZSWIM8. In terms of processing, phosphorylated by FYN on Tyr-198 and Tyr-220 upon reelin induction in embryonic neurons. Also phosphorylated on Ser-491 independently of reelin signaling. Ubiquitinated by various cullin-5-RING E3 ubiquitin-protein ligase complexes (ECS complexes) following ligand-binding and phosphorylation, leading to its degradation. Ubiquitinated by the ECS(SOCS7) complex in the cortical plate of the developing cerebral cortex following ligand-binding and phosphorylation by FYN, leading to its degradation by the proteasome. Recognized by ZSWIM8 through a disorder targets misorder mechanism that eliminates misfolded DAB1 via ubiquitination and proteasomal degradation.

Its subcellular location is the cytoplasm. Functionally, signaling adapter of the reelin-mediated signaling pathway, which regulates the migration and differentiation of postmitotic neurons during brain development. Mediates intracellular transduction of Reelin signaling following reelin (RELN)-binding to its receptor: acts by docking proteins through its phosphotyrosine residues and PID domain. The chain is Disabled homolog 1 (DAB1) from Macaca fascicularis (Crab-eating macaque).